Reading from the N-terminus, the 1377-residue chain is DNA-directed RNA polymerase subunit beta' (1377 aa).

The Zn(2+) site is built by C60, C62, C75, and C78. Residues D449, D451, and D453 each contribute to the Mg(2+) site. Positions 777, 851, 858, and 861 each coordinate Zn(2+).

It belongs to the RNA polymerase beta' chain family. In terms of assembly, the RNAP catalytic core consists of 2 alpha, 1 beta, 1 beta' and 1 omega subunit. When a sigma factor is associated with the core the holoenzyme is formed, which can initiate transcription. Requires Mg(2+) as cofactor. Zn(2+) is required as a cofactor.

It carries out the reaction RNA(n) + a ribonucleoside 5'-triphosphate = RNA(n+1) + diphosphate. DNA-dependent RNA polymerase catalyzes the transcription of DNA into RNA using the four ribonucleoside triphosphates as substrates. The sequence is that of DNA-directed RNA polymerase subunit beta' from Borrelia recurrentis (strain A1).